The chain runs to 130 residues: UPF0102 protein RPE_0358 (130 aa).

Belongs to the UPF0102 family.

The polypeptide is UPF0102 protein RPE_0358 (Rhodopseudomonas palustris (strain BisA53)).